Here is a 902-residue protein sequence, read N- to C-terminus: Zinc finger CCCH-type antiviral protein 1 (902 aa).

Ala2 is subject to N-acetylalanine. Positions 2–254 (ADPEVCCFIT…ARSKSRDRFF (253 aa)) are N-terminal domain. The Nuclear localization signal signature appears at 69-76 (RARVCRRK). 4 consecutive C3H1-type zinc fingers follow at residues 73–86 (CRRK…DNLH), 88–110 (CKLN…KYSH), 150–172 (CKSY…SRLH), and 169–193 (SRLH…SHNL). Residues 221 to 251 (SKHMQKNPPGPRAPSSHRRNMAYRARSKSRD) form a disordered region. Residues 224-254 (MQKNPPGPRAPSSHRRNMAYRARSKSRDRFF) are binding to EXOSC5. The segment covering 235 to 247 (SSHRRNMAYRARS) has biased composition (basic residues). Phosphoserine; by GSK3-beta occurs at positions 257, 263, 267, and 271. Residues 265-278 (SASAERSCTPSPDQ) show a composition bias toward polar residues. Disordered stretches follow at residues 265–287 (SASA…SLED) and 299–373 (YLGS…GARR). Thr273 is modified (phosphothreonine). Phosphoserine is present on residues Ser275 and Ser284. The short motif at 285-292 (LEDAPVDD) is the Nuclear export signal element. Phosphoserine occurs at positions 302, 327, 335, 355, 378, and 387. 2 stretches are compositionally biased toward polar residues: residues 310–336 (SGSS…NGSQ) and 344–369 (PGST…TNDQ). Thr393 bears the Phosphothreonine mark. 4 positions are modified to phosphoserine: Ser407, Ser469, Ser492, and Ser494. The segment at 445-481 (LNYKSTSSGHREISSPRIQDAGPASRDVQATGRIADD) is disordered. At Thr554 the chain carries Phosphothreonine. 2 positions are modified to phosphoserine: Tyr572 and Ser590. Positions 594–681 (SVTKPANSVF…ASKTQKDVIR (88 aa)) constitute a WWE domain. Residues 716–902 (PQEDFCFLSS…YTEDKACVIS (187 aa)) enclose the PARP catalytic domain.

It belongs to the ARTD/PARP family. In terms of assembly, homodimer or homooligomer. Homooligomerization is essential for its antiviral activity. Interacts with EXOSC5. Interacts (via N-terminal domain) with DDX17 in an RNA-independent manner. Interacts with EXOSC3, EXOSC7, DCP2 and DCP1A. Interacts with PARN in an RNA-independent manner. Interacts with XRN1 in an RNA-dependent manner. Isoform 2 interacts (via zinc-fingers) with RIGI in an RNA-dependent manner. Interacts (via N-terminal domain) with DHX30 (via N-terminus) in an RNA-independent manner. Post-translationally, phosphorylation at Ser-275 is essential for sequential phosphorylation of Ser-271, Ser-267, Ser-263 and Ser-257 by GSK3-beta. Phosphorylation by GSK3-beta enhances its antiviral activity.

The protein localises to the cytoplasm. It localises to the nucleus. Antiviral protein which inhibits the replication of viruses by recruiting the cellular RNA degradation machineries to degrade the viral mRNAs. Binds to a ZAP-responsive element (ZRE) present in the target viral mRNA, recruits cellular poly(A)-specific ribonuclease PARN to remove the poly(A) tail, and the 3'-5' exoribonuclease complex exosome to degrade the RNA body from the 3'-end. It also recruits the decapping complex DCP1-DCP2 through RNA helicase p72 (DDX17) to remove the cap structure of the viral mRNA to initiate its degradation from the 5'-end. Its target viruses belong to families which include retroviridae: human immunodeficiency virus type 1 (HIV-1), moloney and murine leukemia virus (MoMLV) and xenotropic MuLV-related virus (XMRV), filoviridae: ebola virus (EBOV) and marburg virus (MARV), togaviridae: sindbis virus (SINV) and Ross river virus (RRV). Specifically targets the multiply spliced but not unspliced or singly spliced HIV-1 mRNAs for degradation. Isoform 1 is a more potent viral inhibitor than isoform 2. Isoform 2 acts as a positive regulator of RIGI signaling resulting in activation of the downstream effector IRF3 leading to the expression of type I IFNs and IFN stimulated genes (ISGs). The polypeptide is Zinc finger CCCH-type antiviral protein 1 (Homo sapiens (Human)).